The following is a 446-amino-acid chain: Tubulin alpha-1B chain (446 aa).

Gln11 is a GTP binding site. The segment at 34-55 is disordered; that stretch reads GRLMDDSPSKHDSGSTFFSETG. A compositionally biased stretch (basic and acidic residues) spans 35-46; that stretch reads RLMDDSPSKHDS. GTP-binding residues include Glu69, Ser138, Gly142, Thr143, Ser177, Asn204, and Asn226. Residue Glu69 participates in Mg(2+) binding. Glu252 is an active-site residue.

This sequence belongs to the tubulin family. As to quaternary structure, dimer of alpha and beta chains. A typical microtubule is a hollow water-filled tube with an outer diameter of 25 nm and an inner diameter of 15 nM. Alpha-beta heterodimers associate head-to-tail to form protofilaments running lengthwise along the microtubule wall with the beta-tubulin subunit facing the microtubule plus end conferring a structural polarity. Microtubules usually have 13 protofilaments but different protofilament numbers can be found in some organisms and specialized cells. The cofactor is Mg(2+).

It is found in the cytoplasm. Its subcellular location is the cytoskeleton. The enzyme catalyses GTP + H2O = GDP + phosphate + H(+). Functionally, tubulin is the major constituent of microtubules, a cylinder consisting of laterally associated linear protofilaments composed of alpha- and beta-tubulin heterodimers. Microtubules grow by the addition of GTP-tubulin dimers to the microtubule end, where a stabilizing cap forms. Below the cap, tubulin dimers are in GDP-bound state, owing to GTPase activity of alpha-tubulin. This chain is Tubulin alpha-1B chain (TUB-1B), found in Schizophyllum commune (Split gill fungus).